The primary structure comprises 508 residues: WD repeat-containing protein JIP5 (508 aa).

WD repeat units follow at residues 62–105 (EARK…WRTK), 106–145 (RHKG…VVKK), 149–188 (DGGS…TKNT), 193–233 (HGGD…MKQP), 253–294 (DQED…LEDQ), and 345–382 (SGLD…NSDS). A disordered region spans residues 376–508 (KEENSDSDSD…SHGITKFDGL (133 aa)). Residues 380–393 (SDSDSDSDINDDSE) are compositionally biased toward acidic residues. Low complexity predominate over residues 407 to 419 (ELGSGSESEVESD). Residues 431–472 (CTGSDLPGDIEGSEGENNSNDDDNHDDREELWKELDQPTSDE) form a WD 7 repeat. Residues 441–454 (EGSEGENNSNDDDN) show a composition bias toward acidic residues. Residues 455 to 466 (HDDREELWKELD) show a composition bias toward basic and acidic residues. A compositionally biased stretch (basic residues) spans 478-492 (KRSLKVKDKKNKKFK).

It belongs to the WD repeat WDR55 family.

It localises to the nucleus. The protein localises to the nucleolus. In Candida glabrata (strain ATCC 2001 / BCRC 20586 / JCM 3761 / NBRC 0622 / NRRL Y-65 / CBS 138) (Yeast), this protein is WD repeat-containing protein JIP5 (JIP5).